Consider the following 197-residue polypeptide: Large ribosomal subunit protein bL25 (197 aa).

The protein belongs to the bacterial ribosomal protein bL25 family. CTC subfamily. In terms of assembly, part of the 50S ribosomal subunit; part of the 5S rRNA/L5/L18/L25 subcomplex. Contacts the 5S rRNA. Binds to the 5S rRNA independently of L5 and L18.

This is one of the proteins that binds to the 5S RNA in the ribosome where it forms part of the central protuberance. The protein is Large ribosomal subunit protein bL25 of Carboxydothermus hydrogenoformans (strain ATCC BAA-161 / DSM 6008 / Z-2901).